The chain runs to 64 residues: Large ribosomal subunit protein bL35 (64 aa).

Residues 20 to 42 are disordered; the sequence is GRVKREKMYGSHNLEKKNRKRTR. Positions 25-35 are enriched in basic and acidic residues; it reads EKMYGSHNLEK.

It belongs to the bacterial ribosomal protein bL35 family.

This is Large ribosomal subunit protein bL35 from Chlorobium phaeobacteroides (strain BS1).